The following is a 109-amino-acid chain: Tyrosine-protein phosphatase 4 (109 aa).

One can recognise a Tyrosine-protein phosphatase domain in the interval 1–109 (SKSASIVMLT…QNSGNHPIVI (109 aa)). Glu-78 is a binding site for substrate.

The protein belongs to the protein-tyrosine phosphatase family.

The catalysed reaction is O-phospho-L-tyrosyl-[protein] + H2O = L-tyrosyl-[protein] + phosphate. This Styela plicata (Wrinkled sea squirt) protein is Tyrosine-protein phosphatase 4 (STY-4).